The primary structure comprises 114 residues: Ribonuclease U2 (114 aa).

3 cysteine pairs are disulfide-bonded: cysteine 1-cysteine 54, cysteine 9-cysteine 113, and cysteine 55-cysteine 96. Aspartate 29, valine 30, alanine 31, asparagine 32, aspartate 37, and tyrosine 39 together coordinate Ca(2+). 39–49 (YPHQYYDEASE) serves as a coordination point for substrate. Residue histidine 41 is part of the active site. Glutamate 62 acts as the Proton acceptor in catalysis. Arginine 85 contributes to the substrate binding site. Histidine 101 (proton donor) is an active-site residue. 108–110 (DGF) lines the substrate pocket.

It belongs to the ribonuclease U2 family.

It carries out the reaction [RNA] containing adenosine + H2O = an [RNA fragment]-3'-adenosine-3'-phosphate + a 5'-hydroxy-ribonucleotide-3'-[RNA fragment].. The catalysed reaction is [RNA] containing guanosine + H2O = an [RNA fragment]-3'-guanosine-3'-phosphate + a 5'-hydroxy-ribonucleotide-3'-[RNA fragment].. The sequence is that of Ribonuclease U2 (RNU2) from Ustilago sphaerogena (Smut fungus).